Consider the following 708-residue polypeptide: Soluble guanylate cyclase gcy-37 (708 aa).

H105 lines the heme pocket. Positions L368–E409 form a coiled coil. The 129-residue stretch at S434–C562 folds into the Guanylate cyclase domain. Residues D439 and D483 each contribute to the Mg(2+) site.

This sequence belongs to the adenylyl cyclase class-4/guanylyl cyclase family. In terms of assembly, heterodimer; with other soluble guanylate cyclases. The cofactor is heme. In terms of tissue distribution, expressed in a small number of neurons, corresponding to URX, AQR and PQR neurons.

It localises to the cytoplasm. It catalyses the reaction GTP = 3',5'-cyclic GMP + diphosphate. May be regulated by molecular oxygen. Probably not activated by nitric oxide (NO). In terms of biological role, synthesizes cyclic GMP (cGMP) from GTP. May play a role in sensory neurons. The protein is Soluble guanylate cyclase gcy-37 (gcy-37) of Caenorhabditis elegans.